A 73-amino-acid polypeptide reads, in one-letter code: Translation initiation factor IF-1 (73 aa).

An S1-like domain is found at 1-73 (MAKKDGAIEV…SRGRIVYRYK (73 aa)).

It belongs to the IF-1 family. Component of the 30S ribosomal translation pre-initiation complex which assembles on the 30S ribosome in the order IF-2 and IF-3, IF-1 and N-formylmethionyl-tRNA(fMet); mRNA recruitment can occur at any time during PIC assembly.

It is found in the cytoplasm. Functionally, one of the essential components for the initiation of protein synthesis. Stabilizes the binding of IF-2 and IF-3 on the 30S subunit to which N-formylmethionyl-tRNA(fMet) subsequently binds. Helps modulate mRNA selection, yielding the 30S pre-initiation complex (PIC). Upon addition of the 50S ribosomal subunit IF-1, IF-2 and IF-3 are released leaving the mature 70S translation initiation complex. The chain is Translation initiation factor IF-1 from Mycolicibacterium smegmatis (strain ATCC 700084 / mc(2)155) (Mycobacterium smegmatis).